Here is a 39-residue protein sequence, read N- to C-terminus: Cytochrome b559 subunit beta (39 aa).

The helical transmembrane segment at W14–S30 threads the bilayer. Heme is bound at residue H18.

This sequence belongs to the PsbE/PsbF family. As to quaternary structure, heterodimer of an alpha subunit and a beta subunit. PSII is composed of 1 copy each of membrane proteins PsbA, PsbB, PsbC, PsbD, PsbE, PsbF, PsbH, PsbI, PsbJ, PsbK, PsbL, PsbM, PsbT, PsbX, PsbY, PsbZ, Psb30/Ycf12, at least 3 peripheral proteins of the oxygen-evolving complex and a large number of cofactors. It forms dimeric complexes. It depends on heme b as a cofactor.

Its subcellular location is the plastid. The protein localises to the chloroplast thylakoid membrane. In terms of biological role, this b-type cytochrome is tightly associated with the reaction center of photosystem II (PSII). PSII is a light-driven water:plastoquinone oxidoreductase that uses light energy to abstract electrons from H(2)O, generating O(2) and a proton gradient subsequently used for ATP formation. It consists of a core antenna complex that captures photons, and an electron transfer chain that converts photonic excitation into a charge separation. The chain is Cytochrome b559 subunit beta from Cucumis sativus (Cucumber).